Here is a 757-residue protein sequence, read N- to C-terminus: RNA-directed RNA polymerase catalytic subunit (757 aa).

Residues 53-82 form a disordered region; sequence GRWTTNTETGAPQLNPIDGPLPEDNEPSGY. The span at 55 to 64 shows a compositional bias: polar residues; sequence WTTNTETGAP. 2 short sequence motifs (nuclear localization signal) span residues 187-195 and 203-216; these read RKRRVRDNM and RTIG…NKRS. A promoter-binding site region spans residues 249–256; that stretch reads RGFVYFVE. Positions 286 to 483 constitute a RdRp catalytic domain; that stretch reads VRKMMTNSQD…GINMSKKKSY (198 aa).

Belongs to the influenza viruses polymerase PB1 family. Influenza RNA polymerase is composed of three subunits: PB1, PB2 and PA. Interacts (via N-terminus) with PA (via C-terminus). Interacts (via C-terminus) with PB2 (via N-terminus); this interaction is essential for transcription initiation. Interacts (via C-terminus) with human PKP2 (via N-terminus); the interaction competitively inhibits the interaction between the RNA polymerase subunits PB1 and PB2. Phosphorylated by host PRKCA.

The protein resides in the host nucleus. The protein localises to the host cytoplasm. It carries out the reaction RNA(n) + a ribonucleoside 5'-triphosphate = RNA(n+1) + diphosphate. RNA-dependent RNA polymerase which is responsible for replication and transcription of virus RNA segments. The transcription of viral mRNAs occurs by a unique mechanism called cap-snatching. 5' methylated caps of cellular mRNAs are cleaved after 10-13 nucleotides by PA. In turn, these short capped RNAs are used as primers by PB1 for transcription of viral mRNAs. During virus replication, PB1 initiates RNA synthesis and copy vRNA into complementary RNA (cRNA) which in turn serves as a template for the production of more vRNAs. This is RNA-directed RNA polymerase catalytic subunit from Influenza A virus (strain A/Brevig Mission/1/1918 H1N1) (Influenza A virus (strain A/South Carolina/1/1918 H1N1)).